The primary structure comprises 145 residues: MSITTEITAHYWAFAVFLLSALGLCVFMLTGGFLLGARARARSKNVPFESGIDPVGTARLRLSAKFYLVAMFFVIFDVETLYLYAWATAIREAGWVGFIEATIFILILLAGLVYLVRIGALDWTPERSRRLRRAGPIGETPRHQE.

A run of 3 helical transmembrane segments spans residues Phe14–Leu34, Phe66–Trp86, and Val96–Val116.

This sequence belongs to the complex I subunit 3 family. In terms of assembly, NDH-1 is composed of 13 different subunits. Subunits NuoA, H, J, K, L, M, N constitute the membrane sector of the complex.

The protein resides in the cell inner membrane. The enzyme catalyses a quinone + NADH + 5 H(+)(in) = a quinol + NAD(+) + 4 H(+)(out). Functionally, NDH-1 shuttles electrons from NADH, via FMN and iron-sulfur (Fe-S) centers, to quinones in the respiratory chain. The immediate electron acceptor for the enzyme in this species is believed to be ubiquinone. Couples the redox reaction to proton translocation (for every two electrons transferred, four hydrogen ions are translocated across the cytoplasmic membrane), and thus conserves the redox energy in a proton gradient. The chain is NADH-quinone oxidoreductase subunit A from Sodalis glossinidius (strain morsitans).